We begin with the raw amino-acid sequence, 313 residues long: Zinc transporter ZitB (313 aa).

At 1-20 the chain is on the cytoplasmic side; sequence MAHSHSHTSSHLPEDNNARR. A helical transmembrane segment spans residues 21–41; the sequence is LLYAFGVTAGFMLVEVVGGFL. Residues 42–47 are Periplasmic-facing; the sequence is SGSLAL. The helical transmembrane segment at 48–68 threads the bilayer; the sequence is LADAGHMLTDTAALLFALLAV. Topologically, residues 69-89 are cytoplasmic; the sequence is QFSRRPPTIRHTFGWLRLTTL. The helical transmembrane segment at 90-110 threads the bilayer; sequence AAFVNAIALVVITILIVWEAI. Residues 111–121 lie on the Periplasmic side of the membrane; sequence ERFRTPRPVEG. The chain crosses the membrane as a helical span at residues 122-142; the sequence is GMMMAIAVAGLLANILSFWLL. Residues 143–159 lie on the Cytoplasmic side of the membrane; that stretch reads HHGSEEKNLNVRAAALH. Residues 160-180 traverse the membrane as a helical segment; the sequence is VLGDLLGSVGAIIAALIIIWT. G181 is a topological domain (periplasmic). A helical transmembrane segment spans residues 182–202; the sequence is WTPADPILSILVSLLVLRSAW. At 203–313 the chain is on the cytoplasmic side; it reads RLLKDSVNEL…GVSGHSHHHH (111 aa).

This sequence belongs to the cation diffusion facilitator (CDF) transporter (TC 2.A.4) family. SLC30A subfamily.

The protein resides in the cell inner membrane. Its function is as follows. Involved in zinc efflux across the cytoplasmic membrane, thus reducing zinc accumulation in the cytoplasm and rendering bacteria more resistant to zinc. It may contribute to zinc homeostasis at low concentrations of zinc, whereas ZntA is required for growth at more toxic concentrations. The sequence is that of Zinc transporter ZitB (zitB) from Escherichia coli (strain K12).